Here is a 101-residue protein sequence, read N- to C-terminus: DET1- and DDB1-associated protein 1 (101 aa).

Positions 67–101 (NAAKKRDQDQLEIGETSAPPRKIARTDSQEMNEDT) are disordered.

Belongs to the DDA1 family. Component of numerous DCX (DDB1-CUL4-X-box) E3 ubiquitin-protein ligase complexes which consist of a core of DDB1, cullin-4 (CUL4A or CUL4B), DDA1 and RBX1.

Its pathway is protein modification; protein ubiquitination. Its function is as follows. Functions as a component of numerous distinct DCX (DDB1-CUL4-X-box) E3 ubiquitin-protein ligase complexes which mediate the ubiquitination and subsequent proteasomal degradation of target proteins. In the DCX complexes, acts as a scaffolding subunit required to stabilize the complex. This is DET1- and DDB1-associated protein 1 from Xenopus laevis (African clawed frog).